We begin with the raw amino-acid sequence, 275 residues long: Ribosomal RNA small subunit methyltransferase A (275 aa).

Positions 27, 29, 54, 76, 102, and 123 each coordinate S-adenosyl-L-methionine.

The protein belongs to the class I-like SAM-binding methyltransferase superfamily. rRNA adenine N(6)-methyltransferase family. RsmA subfamily.

The protein localises to the cytoplasm. It catalyses the reaction adenosine(1518)/adenosine(1519) in 16S rRNA + 4 S-adenosyl-L-methionine = N(6)-dimethyladenosine(1518)/N(6)-dimethyladenosine(1519) in 16S rRNA + 4 S-adenosyl-L-homocysteine + 4 H(+). Specifically dimethylates two adjacent adenosines (A1518 and A1519) in the loop of a conserved hairpin near the 3'-end of 16S rRNA in the 30S particle. May play a critical role in biogenesis of 30S subunits. This Chelativorans sp. (strain BNC1) protein is Ribosomal RNA small subunit methyltransferase A.